Here is a 351-residue protein sequence, read N- to C-terminus: Uroporphyrinogen decarboxylase (351 aa).

Substrate-binding positions include 25–29 (RQAGR), F43, D74, Y151, S206, and H325.

This sequence belongs to the uroporphyrinogen decarboxylase family. Homodimer.

It localises to the cytoplasm. The catalysed reaction is uroporphyrinogen III + 4 H(+) = coproporphyrinogen III + 4 CO2. The protein operates within porphyrin-containing compound metabolism; protoporphyrin-IX biosynthesis; coproporphyrinogen-III from 5-aminolevulinate: step 4/4. Catalyzes the decarboxylation of four acetate groups of uroporphyrinogen-III to yield coproporphyrinogen-III. The chain is Uroporphyrinogen decarboxylase from Chlorobaculum tepidum (strain ATCC 49652 / DSM 12025 / NBRC 103806 / TLS) (Chlorobium tepidum).